A 2460-amino-acid chain; its full sequence is Reducing polyketide synthase BOA6 (2460 aa).

A Ketosynthase family 3 (KS3) domain is found at 5–438 (NEPIAVIGTG…GTNAHAILES (434 aa)). Active-site for beta-ketoacyl synthase activity residues include Cys-178, His-317, and His-360. The segment at 549-864 (VFTGQGAQWP…PYTGVLSRGD (316 aa)) is malonyl-CoA:ACP transacylase (MAT) domain. An N-terminal hotdog fold region spans residues 938–1073 (HELLGVRCAD…GRIKMTLGTP (136 aa)). The dehydratase (DH) domain stretch occupies residues 938–1244 (HELLGVRCAD…QMQSFTAARP (307 aa)). A PKS/mFAS DH domain is found at 938-1245 (HELLGVRCAD…MQSFTAARPS (308 aa)). Catalysis depends on His-970, which acts as the Proton acceptor; for dehydratase activity. A C-terminal hotdog fold region spans residues 1088–1245 (LGPLNVDRFY…MQSFTAARPS (158 aa)). Asp-1145 functions as the Proton donor; for dehydratase activity in the catalytic mechanism. The segment at 1399-1586 (NKFVTAAMKK…VNDFKDKSRY (188 aa)) is methyltransferase (MT) domain. A ketoreductase (KR) domain region spans residues 2098-2266 (SYLLAGLTGD…KRGGVASVIH (169 aa)). In terms of domain architecture, Carrier spans 2378 to 2456 (DEVLGVMQKC…DLCELACEEY (79 aa)). Ser-2416 carries the post-translational modification O-(pantetheine 4'-phosphoryl)serine.

Its pathway is polyketide biosynthesis. Reducing polyketide synthase; part of the gene cluster A that mediates the biosynthesis of botcinic acid and its botcinin derivatives, acetate-derived polyketides that contribute to virulence when combined with the sesquiterpene botrydial. Botcinic acid and its derivatives have been shown to induce chlorosis and necrosis during host plant infection, but also have antifungal activities. Two polyketide synthases, BOA6 and BOA9, are involved in the biosynthesis of botcinins. BOA6 mediates the formation of the per-methylated tetraketide core by condensation of four units of malonyl-CoA with one unit of acetyl-CoA, which would be methylated in activated methylene groups to yield a bicyclic acid intermediate that could then either be converted to botrylactone derivatives or lose the starter acetate unit through a retro-Claisen type C-C bond cleavage to yield botcinin derivatives. The second polyketide synthase, BOA9, is probably required for the biosynthesis of the tetraketide side chain of botcinins. The methyltransferase (MT) domain within BOA6 is probably responsible for the incorporation of four methyl groups. The trans-enoyl reductase BOA5 might take over the enoyl reductase function of BOA6 that misses an ER domain. The monooxygenases BOA2, BOA3 and BOA4 might be involved in further hydroxylations at C4, C5 and C8, whereas BOA7, close to BOA9, could potentially be involved in the hydroxylation at C4 in the side chain of botcinins. This chain is Reducing polyketide synthase BOA6, found in Botryotinia fuckeliana (strain B05.10) (Noble rot fungus).